A 402-amino-acid polypeptide reads, in one-letter code: Multidrug resistance protein MdtH (402 aa).

The next 11 membrane-spanning stretches (helical) occupy residues 13–33, 34–54, 99–116, 139–159, 165–185, 214–234, 243–263, 277–297, 300–320, 340–360, and 368–388; these read YFLL…FPLI, SIRF…ALGL, PWVL…GTLF, LLMM…SWLL, LVCS…AWYL, VLTL…LPIM, AAVK…LYPI, LMAG…TSSL, LFTL…ARET, LGLA…FDAG, and LPWL…WWQF.

Belongs to the major facilitator superfamily. DHA1 family. MdtH (TC 2.A.1.2.21) subfamily.

The protein localises to the cell inner membrane. The sequence is that of Multidrug resistance protein MdtH from Klebsiella pneumoniae (strain 342).